Consider the following 487-residue polypeptide: MINASVSELRRALDTRQVSSVELATLFLDRIAERNPALNAFITIDREGALAAARAADARIAAGTAGPLTGIPLAHKDLFCTEGVLTTCGSKMLADFVSPYDAHVVSRLKDAGAVSLGKTNMDEFAMGSSNESSHYGAVRNPWDTTRIPGGSSGGSAAAVAARLVPLATGSDTGGSVRQPASHTGVTGIKPTYGVVSRYGMIAYASSLDQGGAFGASAEDCALLLTAMAGFDPRDSTCLDRPAEDYAAALAPTAGGKPLAGLRIGLPREFFAEGMADDVRAAVDAALDQYRALGAVTVEVSLPNAKLAVPAYYVIAPAEASSNLSRFDGVRYGHRAAEYGDLNDMYCKSRAEGFGAEVKRRILVGTYVLSHGYYDAYYLQAQKLRRLIAQDFQAAFAQCDVIAGPTSPTTAWAIGEKADDPVQMYLSDIYTIAVNLAGLPGLSHPCGFGAGRLPVGLQLIGNYFGESRLLATAHQYQQASDWHLQRPE.

Active-site charge relay system residues include Lys76 and Ser151. Ser175 (acyl-ester intermediate) is an active-site residue.

This sequence belongs to the amidase family. GatA subfamily. As to quaternary structure, heterotrimer of A, B and C subunits.

The catalysed reaction is L-glutamyl-tRNA(Gln) + L-glutamine + ATP + H2O = L-glutaminyl-tRNA(Gln) + L-glutamate + ADP + phosphate + H(+). Allows the formation of correctly charged Gln-tRNA(Gln) through the transamidation of misacylated Glu-tRNA(Gln) in organisms which lack glutaminyl-tRNA synthetase. The reaction takes place in the presence of glutamine and ATP through an activated gamma-phospho-Glu-tRNA(Gln). This Azoarcus sp. (strain BH72) protein is Glutamyl-tRNA(Gln) amidotransferase subunit A.